A 1037-amino-acid chain; its full sequence is Serine/threonine-protein kinase ULK2 (1037 aa).

Residues 9 to 271 (YCKRDLVGHG…FEAFFSHPFL (263 aa)) enclose the Protein kinase domain. ATP is bound by residues 15 to 23 (VGHGAFAVV) and lysine 39. Aspartate 131 acts as the Proton acceptor in catalysis. The disordered stretch occupies residues 319 to 350 (ENLSSPPLGPPNYLQVSKDSASNSSKNSSCDT). The segment covering 335–348 (SKDSASNSSKNSSC) has biased composition (low complexity). Position 430 is a phosphoserine (serine 430). Disordered regions lie at residues 452–480 (CSPVPGDTVQTGGRRLSTGSSRPYSPSPL), 494–515 (GHPQGHEARSRHSSGSPVPQTQ), 540–594 (QKLR…KTPL), and 626–697 (HGPA…NTER). Composition is skewed to polar residues over residues 506–515 (SSGSPVPQTQ) and 571–585 (LGTSPTKHTGSSPRN). Residues 632–643 (QSKDGNDPRECS) are compositionally biased toward basic and acidic residues. The span at 658–678 (QQQSKAVFGRSVSTGKLSEQQ) shows a compositional bias: polar residues. Serine 772 and serine 781 each carry phosphoserine. The tract at residues 813-1037 (ELPEETLMER…SALCCSTATV (225 aa)) is CTD-like region.

This sequence belongs to the protein kinase superfamily. Ser/Thr protein kinase family. APG1/unc-51/ULK1 subfamily. Component of a complex consisting of ATG13/KIAA0652, ULK1 and RB1CC1/FIP200. Interacts (via C-terminus) with ATG13/KIAA0652. Associates with the mammalian target of rapamycin complex 1 (mTORC1) through an interaction with RPTOR. Interacts with SYNGAP1. Autophosphorylated. In response to nutrient limitation, probably phosphorylated and activated by AMPK, leading to activate autophagy. As to expression, widely expressed.

It is found in the cytoplasmic vesicle membrane. The catalysed reaction is L-seryl-[protein] + ATP = O-phospho-L-seryl-[protein] + ADP + H(+). The enzyme catalyses L-threonyl-[protein] + ATP = O-phospho-L-threonyl-[protein] + ADP + H(+). In terms of biological role, serine/threonine-protein kinase involved in autophagy in response to starvation. Acts upstream of phosphatidylinositol 3-kinase PIK3C3 to regulate the formation of autophagophores, the precursors of autophagosomes. Part of regulatory feedback loops in autophagy: acts both as a downstream effector and a negative regulator of mammalian target of rapamycin complex 1 (mTORC1) via interaction with RPTOR. Activated via phosphorylation by AMPK, also acts as a negative regulator of AMPK through phosphorylation of the AMPK subunits PRKAA1, PRKAB2 and PRKAG1. May phosphorylate ATG13/KIAA0652, FRS2, FRS3 and RPTOR; however such data need additional evidences. Not involved in ammonia-induced autophagy or in autophagic response of cerebellar granule neurons (CGN) to low potassium concentration. Plays a role early in neuronal differentiation and is required for granule cell axon formation: may govern axon formation via Ras-like GTPase signaling and through regulation of the Rab5-mediated endocytic pathways within developing axons. This is Serine/threonine-protein kinase ULK2 (Ulk2) from Mus musculus (Mouse).